The following is a 408-amino-acid chain: Probable pectate lyase 18 (408 aa).

The signal sequence occupies residues 1-24 (MKMQTKKLFITIVSFLLYAPLFLS). Asn42 is a glycosylation site (N-linked (GlcNAc...) asparagine). Ca(2+)-binding residues include Asp206, Asp230, and Asp234. Residue Arg286 is part of the active site.

This sequence belongs to the polysaccharide lyase 1 family. The cofactor is Ca(2+). As to expression, expressed in flowers, but not in leaves.

The enzyme catalyses Eliminative cleavage of (1-&gt;4)-alpha-D-galacturonan to give oligosaccharides with 4-deoxy-alpha-D-galact-4-enuronosyl groups at their non-reducing ends.. The protein operates within glycan metabolism; pectin degradation; 2-dehydro-3-deoxy-D-gluconate from pectin: step 2/5. The protein is Probable pectate lyase 18 of Arabidopsis thaliana (Mouse-ear cress).